The sequence spans 403 residues: E2F transcription factor-like E2FE (403 aa).

Residues 34 to 99 (RKQKSLGLLC…RAKNQYTWKG (66 aa)) mediate DNA binding. The tract at residues 128-167 (VKGSDDEDDDEESSQPHSSSQTDSSKPGSLPQSSDPSKID) is disordered. The span at 142 to 152 (QPHSSSQTDSS) shows a compositional bias: low complexity. Over residues 153–163 (KPGSLPQSSDP) the composition is skewed to polar residues. A DNA-binding region spans residues 169–250 (RREKSLGLLT…SRKPAFKWLG (82 aa)). Residues 282 to 319 (VKRSKSSSSSQENATERRLKMKKHSTPESSYNKSFDVH) are disordered.

The protein belongs to the E2F/DP family. As to expression, expressed exclusively in mitotically dividing cells. Highly expressed in young leaves and mature flowers. Lower expression in young stalk and in young and mature flowers.

It is found in the nucleus. Inhibitor of E2F-dependent activation of gene expression. Binds specifically the E2 recognition site without interacting with DP proteins and prevents transcription activation by E2F/DP heterodimers. Controls the timing of endocycle onset and inhibits endoreduplication. In Arabidopsis thaliana (Mouse-ear cress), this protein is E2F transcription factor-like E2FE (E2FE).